The following is a 290-amino-acid chain: Bifunctional protein FolD (290 aa).

Residues 167-169 (GRS), S192, and I233 contribute to the NADP(+) site.

Belongs to the tetrahydrofolate dehydrogenase/cyclohydrolase family. As to quaternary structure, homodimer.

The enzyme catalyses (6R)-5,10-methylene-5,6,7,8-tetrahydrofolate + NADP(+) = (6R)-5,10-methenyltetrahydrofolate + NADPH. It catalyses the reaction (6R)-5,10-methenyltetrahydrofolate + H2O = (6R)-10-formyltetrahydrofolate + H(+). The protein operates within one-carbon metabolism; tetrahydrofolate interconversion. In terms of biological role, catalyzes the oxidation of 5,10-methylenetetrahydrofolate to 5,10-methenyltetrahydrofolate and then the hydrolysis of 5,10-methenyltetrahydrofolate to 10-formyltetrahydrofolate. The polypeptide is Bifunctional protein FolD (Gloeobacter violaceus (strain ATCC 29082 / PCC 7421)).